The following is a 37-amino-acid chain: Cytochrome b6-f complex subunit 5 (37 aa).

Residues 5 to 25 (LLDGLVLGLVFATLGGLFYAA) traverse the membrane as a helical segment.

Belongs to the PetG family. In terms of assembly, the 4 large subunits of the cytochrome b6-f complex are cytochrome b6, subunit IV (17 kDa polypeptide, PetD), cytochrome f and the Rieske protein, while the 4 small subunits are PetG, PetL, PetM and PetN. The complex functions as a dimer.

It is found in the cellular thylakoid membrane. Component of the cytochrome b6-f complex, which mediates electron transfer between photosystem II (PSII) and photosystem I (PSI), cyclic electron flow around PSI, and state transitions. PetG is required for either the stability or assembly of the cytochrome b6-f complex. The sequence is that of Cytochrome b6-f complex subunit 5 from Mastigocladus laminosus (Fischerella sp.).